Reading from the N-terminus, the 358-residue chain is Histidinol-phosphate aminotransferase (358 aa).

Residue lysine 217 is modified to N6-(pyridoxal phosphate)lysine.

It belongs to the class-II pyridoxal-phosphate-dependent aminotransferase family. Histidinol-phosphate aminotransferase subfamily. In terms of assembly, homodimer. Pyridoxal 5'-phosphate serves as cofactor.

It carries out the reaction L-histidinol phosphate + 2-oxoglutarate = 3-(imidazol-4-yl)-2-oxopropyl phosphate + L-glutamate. It participates in amino-acid biosynthesis; L-histidine biosynthesis; L-histidine from 5-phospho-alpha-D-ribose 1-diphosphate: step 7/9. The protein is Histidinol-phosphate aminotransferase of Ruminiclostridium cellulolyticum (strain ATCC 35319 / DSM 5812 / JCM 6584 / H10) (Clostridium cellulolyticum).